We begin with the raw amino-acid sequence, 59 residues long: Large ribosomal subunit protein bL33 (59 aa).

Belongs to the bacterial ribosomal protein bL33 family.

The polypeptide is Large ribosomal subunit protein bL33 (Neorickettsia sennetsu (strain ATCC VR-367 / Miyayama) (Ehrlichia sennetsu)).